The chain runs to 145 residues: uncharacterized protein (145 aa).

A helical membrane pass occupies residues 104 to 124 (IEVIILSHHFVIGFSFLLGLL).

It localises to the membrane. This is an uncharacterized protein from Saccharomyces cerevisiae (strain ATCC 204508 / S288c) (Baker's yeast).